The chain runs to 379 residues: Tryptophan 2,3-dioxygenase (379 aa).

Substrate is bound by residues 57 to 61 and arginine 128; that span reads FIITH. Histidine 312 lines the heme pocket. A substrate-binding site is contributed by threonine 327.

It belongs to the tryptophan 2,3-dioxygenase family. In terms of assembly, homotetramer. Dimer of dimers. The cofactor is heme.

The catalysed reaction is L-tryptophan + O2 = N-formyl-L-kynurenine. It functions in the pathway amino-acid degradation; L-tryptophan degradation via kynurenine pathway; L-kynurenine from L-tryptophan: step 1/2. Its pathway is pigment biosynthesis; ommochrome biosynthesis. Its function is as follows. Heme-dependent dioxygenase that catalyzes the oxidative cleavage of the L-tryptophan (L-Trp) pyrrole ring and converts L-tryptophan to N-formyl-L-kynurenine. Catalyzes the oxidative cleavage of the indole moiety. In Drosophila yakuba (Fruit fly), this protein is Tryptophan 2,3-dioxygenase.